Here is a 1450-residue protein sequence, read N- to C-terminus: Inactive serine/threonine-protein kinase TEX14 (1450 aa).

3 ANK repeats span residues Leu-27–Thr-54, Gln-55–His-84, and Asp-88–Leu-117. Ser-175 and Ser-186 each carry phosphoserine. The 314-residue stretch at Ile-199–Ile-512 folds into the Protein kinase domain. ATP contacts are provided by residues Ile-205–Phe-213 and Lys-267. Ser-431 carries the post-translational modification Phosphoserine; by PLK1. Residues Ser-561 and Ser-662 each carry the phosphoserine modification. A disordered region spans residues Ser-700–Ser-720. Positions Gly-791–Tyr-797 match the GPPX3Y motif. 4 disordered regions span residues Val-852–Val-906, Pro-947–Glu-977, Asp-992–Lys-1012, and Gln-1035–Ile-1062. 2 stretches are compositionally biased toward polar residues: residues Lys-875 to Gln-886 and Lys-894 to Val-906. The D-box signature appears at Arg-889–Asn-897. Over residues Asp-992 to Asn-1011 the composition is skewed to basic and acidic residues. Over residues Gln-1038–Pro-1061 the composition is skewed to polar residues. 2 positions are modified to phosphoserine: Ser-1060 and Ser-1221. 2 disordered regions span residues Thr-1261 to Leu-1282 and Lys-1300 to Thr-1418. Polar residues-rich tracts occupy residues Lys-1300–Glu-1311 and Thr-1332–Arg-1344. 2 positions are modified to phosphoserine: Ser-1357 and Ser-1358. Basic and acidic residues-rich tracts occupy residues Ser-1383–Gln-1397 and Ser-1404–Asp-1413. Ser-1412 and Ser-1449 each carry phosphoserine.

It belongs to the protein kinase superfamily. Interacts with KIF23 and RBM44. Interacts with CEP55; inhibiting interaction between CEP55 and PDCD6IP/ALIX and TSG101. Post-translationally, phosphorylated on Thr residues by CDK1 during early phases of mitosis, promoting the interaction with PLK1 and recruitment to kinetochores. Phosphorylated on Ser-431 by PLK1 during late prometaphase promotes the rapid depletion from kinetochores and its subsequent degradation by the APC/C complex. Detected in testis and spermatogonia. Not detectable in the other tissues tested.

The protein resides in the cytoplasm. It is found in the midbody. It localises to the chromosome. Its subcellular location is the centromere. The protein localises to the kinetochore. Functionally, required both for the formation of intercellular bridges during meiosis and for kinetochore-microtubule attachment during mitosis. Intercellular bridges are evolutionarily conserved structures that connect differentiating germ cells and are required for spermatogenesis and male fertility. Acts by promoting the conversion of midbodies into intercellular bridges via its interaction with CEP55: interaction with CEP55 inhibits the interaction between CEP55 and PDCD6IP/ALIX and TSG101, blocking cell abscission and leading to transform midbodies into intercellular bridges. Also plays a role during mitosis: recruited to kinetochores by PLK1 during early mitosis and regulates the maturation of the outer kinetochores and microtubule attachment. Has no protein kinase activity in vitro. The polypeptide is Inactive serine/threonine-protein kinase TEX14 (Tex14) (Mus musculus (Mouse)).